Consider the following 136-residue polypeptide: Nuclear receptor 2C2-associated protein (136 aa).

The protein belongs to the NR2C2AP family.

It localises to the nucleus. Its function is as follows. May act as a repressor of nr2c2-mediated transactivation by suppressing the binding between nr2c2 and its response element in target genes. The protein is Nuclear receptor 2C2-associated protein (nr2c2ap) of Xenopus laevis (African clawed frog).